A 181-amino-acid chain; its full sequence is Bifunctional protein PyrR (181 aa).

The PRPP-binding signature appears at 101-113; it reads VIVVDDVLYTGRT.

It belongs to the purine/pyrimidine phosphoribosyltransferase family. PyrR subfamily. In terms of assembly, homodimer and homohexamer; in equilibrium.

It carries out the reaction UMP + diphosphate = 5-phospho-alpha-D-ribose 1-diphosphate + uracil. Its function is as follows. Regulates transcriptional attenuation of the pyrimidine nucleotide (pyr) operon by binding in a uridine-dependent manner to specific sites on pyr mRNA. This disrupts an antiterminator hairpin in the RNA and favors formation of a downstream transcription terminator, leading to a reduced expression of downstream genes. Also displays a weak uracil phosphoribosyltransferase activity which is not physiologically significant. The protein is Bifunctional protein PyrR of Bacillus velezensis (strain DSM 23117 / BGSC 10A6 / LMG 26770 / FZB42) (Bacillus amyloliquefaciens subsp. plantarum).